Consider the following 141-residue polypeptide: Nucleoside diphosphate kinase (141 aa).

Lys-11, Phe-59, Arg-87, Thr-93, Arg-104, and Asn-114 together coordinate ATP. The active-site Pros-phosphohistidine intermediate is the His-117.

It belongs to the NDK family. Homotetramer. Mg(2+) serves as cofactor.

It is found in the cytoplasm. It carries out the reaction a 2'-deoxyribonucleoside 5'-diphosphate + ATP = a 2'-deoxyribonucleoside 5'-triphosphate + ADP. The catalysed reaction is a ribonucleoside 5'-diphosphate + ATP = a ribonucleoside 5'-triphosphate + ADP. In terms of biological role, major role in the synthesis of nucleoside triphosphates other than ATP. The ATP gamma phosphate is transferred to the NDP beta phosphate via a ping-pong mechanism, using a phosphorylated active-site intermediate. This is Nucleoside diphosphate kinase from Legionella pneumophila subsp. pneumophila (strain Philadelphia 1 / ATCC 33152 / DSM 7513).